Reading from the N-terminus, the 322-residue chain is Cytochrome c biogenesis protein CcsA (322 aa).

6 helical membrane-spanning segments follow: residues 9-29 (ILTHISFSTISIVITIHLITL), 44-64 (GMIVTFFSITGFLVSRWASSG), 143-163 (MLLSYATLLGGPPLSAAILII), 226-246 (VISLGFTLLTGGILGGAVWAN), 259-276 (ETWAFITWTIFAIYLHSR), and 289-309 (IASIGFLIIWICYFGINLLGI).

This sequence belongs to the CcmF/CycK/Ccl1/NrfE/CcsA family. May interact with Ccs1.

The protein localises to the plastid. The protein resides in the chloroplast thylakoid membrane. Functionally, required during biogenesis of c-type cytochromes (cytochrome c6 and cytochrome f) at the step of heme attachment. This is Cytochrome c biogenesis protein CcsA from Triticum aestivum (Wheat).